Reading from the N-terminus, the 63-residue chain is uncharacterized protein (63 aa).

This is an uncharacterized protein from Acidianus bottle-shaped virus (isolate Italy/Pozzuoli) (ABV).